The sequence spans 474 residues: ATP synthase subunit beta, chloroplastic (474 aa).

An ATP-binding site is contributed by 155-162 (GGAGVGKT).

Belongs to the ATPase alpha/beta chains family. As to quaternary structure, F-type ATPases have 2 components, CF(1) - the catalytic core - and CF(0) - the membrane proton channel. CF(1) has five subunits: alpha(3), beta(3), gamma(1), delta(1), epsilon(1). CF(0) has four main subunits: a(1), b(1), b'(1) and c(9-12).

The protein localises to the plastid. It is found in the chloroplast thylakoid membrane. The catalysed reaction is ATP + H2O + 4 H(+)(in) = ADP + phosphate + 5 H(+)(out). In terms of biological role, produces ATP from ADP in the presence of a proton gradient across the membrane. The catalytic sites are hosted primarily by the beta subunits. This chain is ATP synthase subunit beta, chloroplastic, found in Thalassiosira pseudonana (Marine diatom).